An 89-amino-acid chain; its full sequence is Acylphosphatase (89 aa).

Residues 3–88 form the Acylphosphatase-like domain; it reads TLHLQIEGRV…GEYSGFEKRS (86 aa). Active-site residues include Arg18 and Asn36.

It belongs to the acylphosphatase family.

The catalysed reaction is an acyl phosphate + H2O = a carboxylate + phosphate + H(+). The protein is Acylphosphatase (acyP) of Thiobacillus denitrificans (strain ATCC 25259 / T1).